A 395-amino-acid chain; its full sequence is MAVIIPRSDPPSRIHPEPPQTLEIDHFDHLPDSILLLVFNKIGDVKALGRCCVVSRRFHSLVPQVDNVVVRVDCVISDDDSSSLSSIKSRSGSSAGSFSAIFRLVVGGIVKPLQALGQFLGTKRSSSSCGGSGSSSSSLSISGDDDGGEIEQGGVTHHSPTQVLKNFDEIRYLRIELPSGELGIDDGVLLKWRAEFGSTLDNCVILGASSVIPPNPMRVSQACDTTTVVEAPGSGSDDNGSIPESFYTNGGLKLRVVWTISSLIAASARHYLLQPIIAEHKTLDSLVLTDSDGQGVLCMNRDQLEELRVKPLAASSASKRTLVPALNMRLWYAPTLELPDGTVLKGATLVAIRPSESKKEVSDISWVSSAFEEPYETAAKMLVKRRTYCLEMNSF.

Residues 24-72 (IDHFDHLPDSILLLVFNKIGDVKALGRCCVVSRRFHSLVPQVDNVVVRV) enclose the F-box domain. The disordered stretch occupies residues 122-158 (TKRSSSSCGGSGSSSSSLSISGDDDGGEIEQGGVTHH). The span at 125–142 (SSSSCGGSGSSSSSLSIS) shows a compositional bias: low complexity.

In Arabidopsis thaliana (Mouse-ear cress), this protein is F-box protein At5g46170.